The chain runs to 296 residues: GTPase Era (296 aa).

Residues 3-170 form the Era-type G domain; sequence KSGFVTIVGR…KELMFKYIPE (168 aa). Positions 11 to 18 are G1; the sequence is GRPNVGKS. Position 11–18 (11–18) interacts with GTP; the sequence is GRPNVGKS. Positions 37–41 are G2; sequence QTTRN. The tract at residues 58–61 is G3; sequence DTPG. GTP is bound by residues 58-62 and 120-123; these read DTPGI and NKID. Residues 120-123 are G4; the sequence is NKID. The tract at residues 149 to 151 is G5; it reads ISA. One can recognise a KH type-2 domain in the interval 201-278; it reads LSEEVPHGIA…YIRLWVKVKE (78 aa).

This sequence belongs to the TRAFAC class TrmE-Era-EngA-EngB-Septin-like GTPase superfamily. Era GTPase family. As to quaternary structure, monomer.

It is found in the cytoplasm. Its subcellular location is the cell membrane. Its function is as follows. An essential GTPase that binds both GDP and GTP, with rapid nucleotide exchange. Plays a role in 16S rRNA processing and 30S ribosomal subunit biogenesis and possibly also in cell cycle regulation and energy metabolism. This is GTPase Era from Clostridium botulinum (strain Kyoto / Type A2).